The chain runs to 64 residues: Large ribosomal subunit protein bL32 (64 aa).

A compositionally biased stretch (basic residues) spans 1–10 (MAVPKRKTTP). A disordered region spans residues 1–22 (MAVPKRKTTPSKRDMRRANHDK). The segment covering 11–22 (SKRDMRRANHDK) has biased composition (basic and acidic residues).

This sequence belongs to the bacterial ribosomal protein bL32 family.

This chain is Large ribosomal subunit protein bL32, found in Sorangium cellulosum (strain So ce56) (Polyangium cellulosum (strain So ce56)).